We begin with the raw amino-acid sequence, 209 residues long: Orotate phosphoribosyltransferase (209 aa).

5-phospho-alpha-D-ribose 1-diphosphate contacts are provided by residues Arg-96, Lys-100, His-102, and 122 to 130 (EDLISTGGS). Ser-126 is a binding site for orotate.

The protein belongs to the purine/pyrimidine phosphoribosyltransferase family. PyrE subfamily. In terms of assembly, homodimer. It depends on Mg(2+) as a cofactor.

The enzyme catalyses orotidine 5'-phosphate + diphosphate = orotate + 5-phospho-alpha-D-ribose 1-diphosphate. It functions in the pathway pyrimidine metabolism; UMP biosynthesis via de novo pathway; UMP from orotate: step 1/2. Its function is as follows. Catalyzes the transfer of a ribosyl phosphate group from 5-phosphoribose 1-diphosphate to orotate, leading to the formation of orotidine monophosphate (OMP). The sequence is that of Orotate phosphoribosyltransferase from Streptococcus pyogenes serotype M1.